We begin with the raw amino-acid sequence, 415 residues long: ATP-dependent Clp protease ATP-binding subunit ClpX (415 aa).

One can recognise a ClpX-type ZB domain in the interval methionine 1 to proline 54. 4 residues coordinate Zn(2+): cysteine 12, cysteine 15, cysteine 35, and cysteine 38. Proline 117–leucine 124 is a binding site for ATP.

Belongs to the ClpX chaperone family. In terms of assembly, component of the ClpX-ClpP complex. Forms a hexameric ring that, in the presence of ATP, binds to fourteen ClpP subunits assembled into a disk-like structure with a central cavity, resembling the structure of eukaryotic proteasomes.

Functionally, ATP-dependent specificity component of the Clp protease. It directs the protease to specific substrates. Can perform chaperone functions in the absence of ClpP. This chain is ATP-dependent Clp protease ATP-binding subunit ClpX, found in Treponema denticola (strain ATCC 35405 / DSM 14222 / CIP 103919 / JCM 8153 / KCTC 15104).